The chain runs to 406 residues: Probable peptidoglycan glycosyltransferase FtsW (406 aa).

The next 9 helical transmembrane spans lie at 22–42, 56–76, 86–106, 116–136, 153–173, 186–206, 280–300, 318–338, and 352–372; these read LWFV…VASA, FFMG…FMML, WGIL…VPGI, WINL…CMVV, LIGF…LLME, VIAL…IVIM, IWVE…FALM, FAGY…IINV, and LPLI…LFVV. Positions 383 to 397 are enriched in basic and acidic residues; it reads SKGGESEERKRKSDE. The tract at residues 383–406 is disordered; that stretch reads SKGGESEERKRKSDESIDDGEALA.

This sequence belongs to the SEDS family. FtsW subfamily.

It is found in the cell inner membrane. It catalyses the reaction [GlcNAc-(1-&gt;4)-Mur2Ac(oyl-L-Ala-gamma-D-Glu-L-Lys-D-Ala-D-Ala)](n)-di-trans,octa-cis-undecaprenyl diphosphate + beta-D-GlcNAc-(1-&gt;4)-Mur2Ac(oyl-L-Ala-gamma-D-Glu-L-Lys-D-Ala-D-Ala)-di-trans,octa-cis-undecaprenyl diphosphate = [GlcNAc-(1-&gt;4)-Mur2Ac(oyl-L-Ala-gamma-D-Glu-L-Lys-D-Ala-D-Ala)](n+1)-di-trans,octa-cis-undecaprenyl diphosphate + di-trans,octa-cis-undecaprenyl diphosphate + H(+). It participates in cell wall biogenesis; peptidoglycan biosynthesis. Peptidoglycan polymerase that is essential for cell division. The protein is Probable peptidoglycan glycosyltransferase FtsW of Marinomonas mediterranea (strain ATCC 700492 / JCM 21426 / NBRC 103028 / MMB-1).